The chain runs to 91 residues: Small ribosomal subunit protein uS17 (91 aa).

Belongs to the universal ribosomal protein uS17 family. In terms of assembly, part of the 30S ribosomal subunit.

Functionally, one of the primary rRNA binding proteins, it binds specifically to the 5'-end of 16S ribosomal RNA. This is Small ribosomal subunit protein uS17 from Salinispora tropica (strain ATCC BAA-916 / DSM 44818 / JCM 13857 / NBRC 105044 / CNB-440).